The sequence spans 162 residues: Mitochondrial fission process protein 1 (162 aa).

3 helical membrane-spanning segments follow: residues 36–56 (SLVKPVVVKFSYVVAFGYVAA), 81–101 (AIIAVDTVLWQTFASVLIPGF), and 128–148 (TVTALGLATIPFIVHPIDAFV).

The protein belongs to the MTFP1 family.

It is found in the mitochondrion inner membrane. Involved in the mitochondrial division probably by regulating membrane fission. Loss-of-function leads to apoptosis. In Caenorhabditis briggsae, this protein is Mitochondrial fission process protein 1.